The sequence spans 617 residues: Vacuolar protein sorting-associated protein 33B (617 aa).

It belongs to the STXBP/unc-18/SEC1 family. In terms of assembly, interacts with vipas39. In terms of tissue distribution, widely expressed from 4 hours post-fertilization (hpf) to 24 hpf. At 48 hpf, localized to brain, retina, ear, liver and proximal intestine. This expression pattern is more pronounced at 72 hpf and persists through 5 days post-fertilization (dpf). At 3 dpf and 4 dpf, expression in the liver is predominantly in developing biliary epithelial cells. No expression detected in kidney or spinal cord.

The protein localises to the late endosome membrane. It is found in the lysosome membrane. In terms of biological role, may play a role in vesicle-mediated protein trafficking to lysosomal compartments and in membrane docking/fusion reactions of late endosomes/lysosomes. Required for proper trafficking and targeting of the collagen-modifying enzyme lysyl hydroxylase 3 (LH3) to intracellular collagen. Mediates phagolysosomal fusion in macrophages. Proposed to be involved in endosomal maturation implicating vipas39. In epithelial cells, the vps33b:vipas39 complex may play a role in the apical recycling pathway and in the maintenance of the apical-basolateral polarity. Plays a role in bile duct development. This is Vacuolar protein sorting-associated protein 33B from Danio rerio (Zebrafish).